Here is a 380-residue protein sequence, read N- to C-terminus: Spore coat protein B (380 aa).

The interval 224–364 is disordered; sequence GPKGSYKKED…SSGKQKEDYS (141 aa). Residues 229–248 are compositionally biased toward basic and acidic residues; the sequence is YKKEDQKNEQNQEDNNDKDS. 3 stretches are compositionally biased toward low complexity: residues 275–288, 296–315, and 338–356; these read SKSG…SSSK, SSDY…SSSK, and SSDY…IKSS.

The protein is Spore coat protein B (cotB) of Bacillus subtilis (strain 168).